Here is a 1829-residue protein sequence, read N- to C-terminus: MIFQSFILGNLVSLCMKIINSVVVVGLYYGFMTTFSIGPSYLFLLRARVMEEGEEGTEKKVSATTGFIAGQLMMFISIYYAPLHLALGRPHTITVLALPYLLFHFFWNNPKHFFDYGSTTRNSMRNLSIQCVFLNNLIFQLFNHFLLPSSMLARLVNIYMFRCNNKMLFVTSSFVGWLIGHILFMKWVGLVLVWMQQKNSIRSNVLIRFNKYLVSELRNSMARIFSILLFITCIYYLGRIPSPIFTKKLKVKETSETEERDVEIEKTFERGGTKQGQEVSAEEDPSPSLFSEEKEDPDKIEETEEIRVNGKEKKKTKHEFHLRFKETCDKNSPVYETSYLDGNQENSKFEIFQLFKEKKEEKYLLWFEKPLVTLLFDYKRWTRPLRYKKNNRFENAVRNEMSHYFFYACRSDGKERISFTYPASLSTFLDMIKKNNYFFATEKLSSDEFSTHWNYTNNQKIKNLSKEFRNRLEGLDKGSLIRDILEKRTQLCNDKTKKKYLPKTYDPLLNGPYRGRIKKFFSPPILNTTYIKNKIRTPWINKIHNLIFINDYHEFEQTIDRFNRKSFSSEEVRSLLTEREREHIDSEDRIKSLNFLFDAVITDPNDQKIRKKAIKEISKRVPRWSYKLIDNVYQELGEYDENVRGKHAFRSRKAKRLVVAVDHQTKGDVSLPHYLEQSDFRRYIIKGSMRAQRRKTVIWKPVQANAHSPLFLDRIDKTLYLSFDISQLMKVILRNWMVKNKNQKLSDYTNAKTRKLDKKEKKKLKGERYQRQEMVRIKQAEGWDKRLLTRILRSSMLVIQSILRKYIVLPLLIIAKNVVRILLFQDPEWSEDFKDWNREIYVKCTYSGVNLSETEFPKNWLIEGIQIKILFPFHLKPWHGSTIQSSHKDPKSEQETDVCFLTIFGLETDMPFGSPQKRRSFFEPIFKELKKKIRKLKTKSFIVLRDFKEGKIKELSKINLREIEKLRETQKNSIISKQMIHEPSIEISSMDWTKLSRTEKKMKDLTNRTSRIRNQIYKITKEKKKGSLTQETNISSNKPTYSVKILDPSKRIWRILKKRNARLIRKSYLFLKFGIEKIYRNIFISTLTIPRINTKPFRESTRKQMKIIEKNIHNNEANPERINKTNKNRIISTIQKLISKTSNKNSKISCNLLSFSQSQAYVFYKLLQVPILNFYNLRPVLQYHGTSLFLKNEIKDFFEKHGIFNYQLRHKPLWNFGRNTRKHCLSGHYQYDLSRIKWARLVPQEWRNRANQHCMAQNKDLIKRDSYEKNGLTHYEKQHFFEADLLRNQKSNFKKHYRYDLLSYKSLNYEDKKDSYIDRSLVQVNNKEEYYSNYNRKKVKLLAMLGSISINNYIGEDDIMDMEKFLYRKYFDWRILNFCLRNKANMEAWVDMDTGTSSNQNTRIGSNNYQKINAINNRVPFYLTIHQDEEINPSTQKGFFCDWMGMNEEILSCPISNPESWFFPEFVLLFNAYRTKPWIIPIKLLLFNFNGNSKKNRTGKKEADLFISPTQKEYFELSNQSKEENELADQGTPRSDAQKQVILGSVLSNQEKDGEENYTGSDMKTRIKKKQSKRETEVQLDFFLKRYLCLQLRWRGAVSFREKILNDMQVYCHLVRLINPSDVAIASIQRGEMSLPILITKKKFALKELTKGGMLIIEPRRLSVKNDGQFFLYQIVGIALVHKNKRKITKRYQEKGYVDKKDFDEFIAKHQKMTGNRNKNHYDLLVPETILLPKRRRELRTLICFNSKNQNGMQKNPVFFNNGKGGGRVLDKNKNLAREKNQLIQLKFFIWANSRLEDLICMNRYWFNTNNGSRFSMVRVHMYPRLKIR.

Transmembrane regions (helical) follow at residues isoleucine 18–glycine 38, phenylalanine 67–leucine 87, proline 90–proline 110, leucine 127–leucine 147, phenylalanine 174–tryptophan 194, and isoleucine 224–isoleucine 244. Positions arginine 260–glycine 272 are enriched in basic and acidic residues. Residues arginine 260–glutamate 301 form a disordered region.

Belongs to the TIC214 family. In terms of assembly, part of the Tic complex.

Its subcellular location is the plastid. It localises to the chloroplast inner membrane. Involved in protein precursor import into chloroplasts. May be part of an intermediate translocation complex acting as a protein-conducting channel at the inner envelope. The polypeptide is Protein TIC 214 (Citrus sinensis (Sweet orange)).